Here is a 760-residue protein sequence, read N- to C-terminus: U-box domain-containing protein 3 (760 aa).

The stretch at 146-217 (LMELMENALR…EQTEQLIELV (72 aa)) forms a coiled coil. The 75-residue stretch at 237-311 (SIPPYFRCPL…ASWLEANRIN (75 aa)) folds into the U-box domain. Positions 424-434 (ILGNHQSSSEM) are enriched in polar residues. A disordered region spans residues 424 to 448 (ILGNHQSSSEMSPKKNLESSNNVNH). ARM repeat units lie at residues 504-543 (IENRVHIGRCGAITPLLSLLYSEEKLTQEHAVTALLNLSI), 545-584 (ELNKAMIVEVGAIEPLVHVLNTGNDRAKENSAASLFSLSV), 586-626 (QVNR…NLSI), 628-666 (HDNKARIVQAKAVKYLVELLDPDLEMVDKAVALLANLSA), and 668-707 (GEGRQAIVREGGIPLLVETVDLGSQRGKENAASVLLQLCL).

The catalysed reaction is S-ubiquitinyl-[E2 ubiquitin-conjugating enzyme]-L-cysteine + [acceptor protein]-L-lysine = [E2 ubiquitin-conjugating enzyme]-L-cysteine + N(6)-ubiquitinyl-[acceptor protein]-L-lysine.. Its pathway is protein modification; protein ubiquitination. Its function is as follows. Functions as an E3 ubiquitin ligase. This chain is U-box domain-containing protein 3 (PUB3), found in Arabidopsis thaliana (Mouse-ear cress).